The chain runs to 595 residues: Indole-3-acetic acid-amido synthetase GH3.3 (595 aa).

Belongs to the IAA-amido conjugating enzyme family.

Its function is as follows. Catalyzes the synthesis of indole-3-acetic acid (IAA)-amino acid conjugates, providing a mechanism for the plant to cope with the presence of excess auxin. Strongly reactive with Glu, Gln, Trp, Asp, Ala, Leu, Phe, Gly, Tyr, Met, Ile and Val. Little or no product formation with His, Ser, Thr, Arg, Lys, or Cys. Also active on pyruvic and butyric acid analogs of IAA, PAA and the synthetic auxin naphthaleneacetic acid (NAA). The two chlorinated synthetic auxin herbicides 2,4-D and 3,6-dichloro-o-anisic acid (dicamba) cannot be used as substrates. The protein is Indole-3-acetic acid-amido synthetase GH3.3 (GH3.3) of Arabidopsis thaliana (Mouse-ear cress).